We begin with the raw amino-acid sequence, 228 residues long: Cytidylate kinase (228 aa).

An ATP-binding site is contributed by 17-25 (GPTASGKGT).

The protein belongs to the cytidylate kinase family. Type 1 subfamily.

Its subcellular location is the cytoplasm. The enzyme catalyses CMP + ATP = CDP + ADP. It catalyses the reaction dCMP + ATP = dCDP + ADP. The chain is Cytidylate kinase from Burkholderia multivorans (strain ATCC 17616 / 249).